A 349-amino-acid chain; its full sequence is Hydroxymethylglutaryl-CoA synthase (349 aa).

The (3S)-3-hydroxy-3-methylglutaryl-CoA site is built by D30 and A31. E82 (proton donor/acceptor) is an active-site residue. (3S)-3-hydroxy-3-methylglutaryl-CoA contacts are provided by C114 and T155. The active-site Acyl-thioester intermediate is C114. R203 provides a ligand contact to CoA. 2 residues coordinate (3S)-3-hydroxy-3-methylglutaryl-CoA: T205 and H238. Residue H238 is the Proton donor/acceptor of the active site. K243 is a CoA binding site. Residues N270 and S300 each coordinate (3S)-3-hydroxy-3-methylglutaryl-CoA.

Belongs to the thiolase-like superfamily. Archaeal HMG-CoA synthase family. In terms of assembly, interacts with acetoacetyl-CoA thiolase that catalyzes the precedent step in the pathway and with a DUF35 protein. The acetoacetyl-CoA thiolase/HMG-CoA synthase complex channels the intermediate via a fused CoA-binding site, which allows for efficient coupling of the endergonic thiolase reaction with the exergonic HMGCS reaction.

It carries out the reaction acetoacetyl-CoA + acetyl-CoA + H2O = (3S)-3-hydroxy-3-methylglutaryl-CoA + CoA + H(+). The protein operates within metabolic intermediate biosynthesis; (R)-mevalonate biosynthesis; (R)-mevalonate from acetyl-CoA: step 2/3. In terms of biological role, catalyzes the condensation of acetyl-CoA with acetoacetyl-CoA to form 3-hydroxy-3-methylglutaryl-CoA (HMG-CoA). Functions in the mevalonate (MVA) pathway leading to isopentenyl diphosphate (IPP), a key precursor for the biosynthesis of isoprenoid compounds that are building blocks of archaeal membrane lipids. The polypeptide is Hydroxymethylglutaryl-CoA synthase (Methanococcus maripaludis (strain C5 / ATCC BAA-1333)).